A 92-amino-acid chain; its full sequence is Small ribosomal subunit protein uS19 (92 aa).

This sequence belongs to the universal ribosomal protein uS19 family.

In terms of biological role, protein S19 forms a complex with S13 that binds strongly to the 16S ribosomal RNA. This Sodalis glossinidius (strain morsitans) protein is Small ribosomal subunit protein uS19.